The chain runs to 507 residues: ESX-5 secretion system ATPase EccB5 (507 aa).

The chain crosses the membrane as a helical span at residues 56 to 76 (VVASVSAALVICLGSLLWSFI).

The protein belongs to the EccB family. Part of the ESX-5 / type VII secretion system (T7SS), which is composed of cytosolic and membrane components. The ESX-5 membrane complex is composed of EccB5, EccC5, EccD5 and EccE5.

The protein localises to the cell inner membrane. An ATPase. Part of the ESX-5 specialized secretion system, which is responsible for the secretion of EsxN and a number of PE_PGRS and PPE proteins. The chain is ESX-5 secretion system ATPase EccB5 from Mycobacterium marinum (strain ATCC BAA-535 / M).